The chain runs to 164 residues: Cytochrome c-type biogenesis protein CcmE (164 aa).

The Cytoplasmic segment spans residues 1-8 (MNPRRKSR). Residues 9-29 (LYLAIVVLIGVALTATLMLYA) traverse the membrane as a helical; Signal-anchor for type II membrane protein segment. The Periplasmic portion of the chain corresponds to 30–164 (LRSNIDLFYT…ATPQNEGAKS (135 aa)). Heme contacts are provided by His-130 and Tyr-134. Residues 131–148 (DEKYTPPEVADAMKENHK) show a composition bias toward basic and acidic residues. Positions 131 to 164 (DEKYTPPEVADAMKENHKGPASAYATPQNEGAKS) are disordered. Polar residues predominate over residues 155–164 (ATPQNEGAKS).

Belongs to the CcmE/CycJ family.

Its subcellular location is the cell inner membrane. Functionally, heme chaperone required for the biogenesis of c-type cytochromes. Transiently binds heme delivered by CcmC and transfers the heme to apo-cytochromes in a process facilitated by CcmF and CcmH. The polypeptide is Cytochrome c-type biogenesis protein CcmE (Serratia proteamaculans (strain 568)).